A 95-amino-acid chain; its full sequence is Large ribosomal subunit protein eL37z (95 aa).

Zn(2+) contacts are provided by Cys19, Cys22, Cys34, and Cys37. The C4-type zinc-finger motif lies at Cys19 to Cys37.

The protein belongs to the eukaryotic ribosomal protein eL37 family. The cofactor is Zn(2+).

Functionally, binds to the 23S rRNA. In Arabidopsis thaliana (Mouse-ear cress), this protein is Large ribosomal subunit protein eL37z (RPL37A).